The sequence spans 463 residues: L-seryl-tRNA(Sec) selenium transferase (463 aa).

Lysine 295 is subject to N6-(pyridoxal phosphate)lysine.

It belongs to the SelA family. Homodecamer; pentamer of dimers. Binds only one seryl-tRNA(Sec) per dimer. The cofactor is pyridoxal 5'-phosphate.

Its subcellular location is the cytoplasm. The catalysed reaction is L-seryl-tRNA(Sec) + selenophosphate + H(+) = L-selenocysteinyl-tRNA(Sec) + phosphate. It functions in the pathway aminoacyl-tRNA biosynthesis; selenocysteinyl-tRNA(Sec) biosynthesis; selenocysteinyl-tRNA(Sec) from L-seryl-tRNA(Sec) (bacterial route): step 1/1. Its function is as follows. Converts seryl-tRNA(Sec) to selenocysteinyl-tRNA(Sec) required for selenoprotein biosynthesis. The chain is L-seryl-tRNA(Sec) selenium transferase from Shigella sonnei (strain Ss046).